We begin with the raw amino-acid sequence, 185 residues long: MESTLIVGADEFFGLSLCERMMDEGIHVDVVLAETEDKMRQMYLEERLMWLGRNELFRQLEHIGDQNYDTICIQFGSFLPLDQYDSPYILVYEEDRKEWDKREKTGSEKTVILPKMYGPWKEETEEDGYYTNDVADELLRFLLEPSRHSKDQLFELQVTEKTSKEEAKTKIIEWKRQFSSIFDKY.

This is an uncharacterized protein from Bacillus subtilis (strain 168).